Here is a 59-residue protein sequence, read N- to C-terminus: MAQTIKITQTRSSIGRLPKHKATLVGLGLRRIGHTVEREDTPAVRGMVNLVSYMVKVEE.

It belongs to the universal ribosomal protein uL30 family. Part of the 50S ribosomal subunit.

This Sodalis glossinidius (strain morsitans) protein is Large ribosomal subunit protein uL30.